The chain runs to 234 residues: Ubiquinone biosynthesis O-methyltransferase (234 aa).

The S-adenosyl-L-methionine site is built by Arg-40, Gly-59, Asp-80, and Met-123.

The protein belongs to the methyltransferase superfamily. UbiG/COQ3 family.

It carries out the reaction a 3-demethylubiquinol + S-adenosyl-L-methionine = a ubiquinol + S-adenosyl-L-homocysteine + H(+). The enzyme catalyses a 3-(all-trans-polyprenyl)benzene-1,2-diol + S-adenosyl-L-methionine = a 2-methoxy-6-(all-trans-polyprenyl)phenol + S-adenosyl-L-homocysteine + H(+). The protein operates within cofactor biosynthesis; ubiquinone biosynthesis. Functionally, O-methyltransferase that catalyzes the 2 O-methylation steps in the ubiquinone biosynthetic pathway. The sequence is that of Ubiquinone biosynthesis O-methyltransferase from Coxiella burnetii (strain CbuG_Q212) (Coxiella burnetii (strain Q212)).